The sequence spans 106 residues: Met repressor (106 aa).

This sequence belongs to the MetJ family. In terms of assembly, homodimer.

It localises to the cytoplasm. Its function is as follows. This regulatory protein, when combined with SAM (S-adenosylmethionine) represses the expression of the methionine regulon and of enzymes involved in SAM synthesis. In Vibrio atlanticus (strain LGP32) (Vibrio splendidus (strain Mel32)), this protein is Met repressor.